A 492-amino-acid chain; its full sequence is B3 domain-containing protein REM3 (492 aa).

Positions 12-104 (NRPFFVRSLA…VFHVTPSGRS (93 aa)) form a DNA-binding region, TF-B3 1. Residues 105 to 116 (FSQIRTSSSSGD) show a composition bias toward low complexity. Residues 105 to 134 (FSQIRTSSSSGDYDSDDDDDEAGDDDSDSK) are disordered. Over residues 117 to 131 (YDSDDDDDEAGDDDS) the composition is skewed to acidic residues. 2 DNA-binding regions (TF-B3) span residues 154–250 (YCLL…LCFK) and 286–382 (FLTV…FCSE). The span at 385–395 (IEQEEAPEERG) shows a compositional bias: basic and acidic residues. Residues 385–427 (IEQEEAPEERGTPLPKRARVSAEVGHSRRTQAPNKSSDDPKIL) form a disordered region.

The protein localises to the nucleus. This chain is B3 domain-containing protein REM3 (REM3), found in Arabidopsis thaliana (Mouse-ear cress).